Reading from the N-terminus, the 119-residue chain is Large ribosomal subunit protein bL19 (119 aa).

The protein belongs to the bacterial ribosomal protein bL19 family.

Its function is as follows. This protein is located at the 30S-50S ribosomal subunit interface and may play a role in the structure and function of the aminoacyl-tRNA binding site. The chain is Large ribosomal subunit protein bL19 from Borreliella afzelii (strain PKo) (Borrelia afzelii).